Consider the following 368-residue polypeptide: Zinc finger protein 24 (368 aa).

Lys22 is covalently cross-linked (Glycyl lysine isopeptide (Lys-Gly) (interchain with G-Cter in SUMO2)). A Glycyl lysine isopeptide (Lys-Gly) (interchain with G-Cter in SUMO1); alternate cross-link involves residue Lys27. A Glycyl lysine isopeptide (Lys-Gly) (interchain with G-Cter in SUMO2); alternate cross-link involves residue Lys27. The 83-residue stretch at 52–134 (RQRFRQFGYQ…TVLEDLESEL (83 aa)) folds into the SCAN box domain. 2 positions are modified to phosphoserine: Ser132 and Ser142. Residues Lys147, Lys177, and Lys236 each participate in a glycyl lysine isopeptide (Lys-Gly) (interchain with G-Cter in SUMO2) cross-link. Residues 251–273 (HICDECGKHFSQGSALILHQRIH) form a C2H2-type 1 zinc finger. The segment at 251–301 (HICDECGKHFSQGSALILHQRIHSGEKPYGCVECGKAFSRSSILVQHQRVH) is necessary and sufficient for nuclear localization. Ser274 is modified (phosphoserine). Glycyl lysine isopeptide (Lys-Gly) (interchain with G-Cter in SUMO2) cross-links involve residues Lys277 and Lys286. C2H2-type zinc fingers lie at residues 279–301 (YGCV…QRVH), 307–329 (YKCL…QRIH), and 335–357 (YECV…XXRH). A Phosphoserine modification is found at Ser292. The residue at position 335 (Tyr335) is a Phosphotyrosine. Glycyl lysine isopeptide (Lys-Gly) (interchain with G-Cter in SUMO2) cross-links involve residues Lys361 and Lys367.

It belongs to the krueppel C2H2-type zinc-finger protein family. Post-translationally, sumoylated.

Its subcellular location is the nucleus. In terms of biological role, transcription factor required for myelination of differentiated oligodendrocytes. Required for the conversion of oligodendrocytes from the premyelinating to the myelinating state. In the developing central nervous system (CNS), involved in the maintenance in the progenitor stage by promoting the cell cycle. Specifically binds to the 5'-TCAT-3' DNA sequence. Has transcription repressor activity in vitro. This chain is Zinc finger protein 24 (ZNF24), found in Pan troglodytes (Chimpanzee).